We begin with the raw amino-acid sequence, 311 residues long: Mycothiol acetyltransferase (311 aa).

Residue E35 participates in 1D-myo-inositol 2-(L-cysteinylamino)-2-deoxy-alpha-D-glucopyranoside binding. 79–81 (LVV) is an acetyl-CoA binding site. In terms of domain architecture, N-acetyltransferase spans 155 to 311 (VRTYVGTVDD…TAYALARIDD (157 aa)). 1D-myo-inositol 2-(L-cysteinylamino)-2-deoxy-alpha-D-glucopyranoside contacts are provided by E180, K225, and E235. Acetyl-CoA is bound by residues 239–241 (LGV) and 246–252 (QGRGLGQ). Y278 is a binding site for 1D-myo-inositol 2-(L-cysteinylamino)-2-deoxy-alpha-D-glucopyranoside. 283–288 (NVAAAR) contacts acetyl-CoA.

Belongs to the acetyltransferase family. MshD subfamily. As to quaternary structure, monomer.

The enzyme catalyses 1D-myo-inositol 2-(L-cysteinylamino)-2-deoxy-alpha-D-glucopyranoside + acetyl-CoA = mycothiol + CoA + H(+). Catalyzes the transfer of acetyl from acetyl-CoA to desacetylmycothiol (Cys-GlcN-Ins) to form mycothiol. This Mycobacterium leprae (strain Br4923) protein is Mycothiol acetyltransferase.